The chain runs to 59 residues: Chromatin protein Cren7 (59 aa).

It belongs to the Cren7 family. As to quaternary structure, monomer. Methylated at multiple sites, to varying extents.

It is found in the chromosome. The protein resides in the cytoplasm. A chromatin protein, binds double-stranded DNA without sequence specificity. Constrains negative DNA supercoils. The chain is Chromatin protein Cren7 from Pyrobaculum neutrophilum (strain DSM 2338 / JCM 9278 / NBRC 100436 / V24Sta) (Thermoproteus neutrophilus).